The sequence spans 179 residues: Replication restart protein DnaT (179 aa).

Residues 155–179 (NGGLPKRDVNTVSEPDSQIPPGFRG) form a disordered region.

It belongs to the DnaT family. In terms of assembly, homooligomerizes. Interacts with PriB. Component of the replication restart primosome. Primosome assembly occurs via a 'hand-off' mechanism. PriA binds to replication forks, subsequently PriB then DnaT bind; DnaT then displaces ssDNA to generate the helicase loading substrate.

In terms of biological role, involved in the restart of stalled replication forks, which reloads the replicative helicase on sites other than the origin of replication. Can function in multiple replication restart pathways. Displaces ssDNA from a PriB-ssDNA complex. Probably forms a spiral filament on ssDNA. This chain is Replication restart protein DnaT, found in Escherichia coli O8 (strain IAI1).